A 97-amino-acid polypeptide reads, in one-letter code: Nuclear protein 2 (97 aa).

Residues 76-97 (LLNGQRKRRQRQLHPKMRTRLT) form a disordered region. Positions 80–97 (QRKRRQRQLHPKMRTRLT) are enriched in basic residues.

Belongs to the NUPR family.

The protein resides in the nucleus. Its function is as follows. Acts as a transcriptional repressor by inhibiting gene expression at the NUPR1 promoter in a p53/TP53-dependent manner in cancer cells. Involved in the G1 cell cycle arrest, and in a decrease in cell viability and cell proliferation. Plays a role as a negative regulator of the protumoral factor NUPR1. The polypeptide is Nuclear protein 2 (Homo sapiens (Human)).